Here is a 451-residue protein sequence, read N- to C-terminus: tRNA modification GTPase MnmE (451 aa).

(6S)-5-formyl-5,6,7,8-tetrahydrofolate-binding residues include R37, E95, and K135. In terms of domain architecture, TrmE-type G spans 232-376; that stretch reads GLSIVIMGPP…LVEAIADFAG (145 aa). Residue N242 coordinates K(+). GTP contacts are provided by residues 242–247, 261–267, and 286–289; these read NAGKST, SEIAGTT, and DTAG. S246 lines the Mg(2+) pocket. Residues S261, I263, and T266 each coordinate K(+). T267 serves as a coordination point for Mg(2+). Position 451 (K451) interacts with (6S)-5-formyl-5,6,7,8-tetrahydrofolate.

It belongs to the TRAFAC class TrmE-Era-EngA-EngB-Septin-like GTPase superfamily. TrmE GTPase family. Homodimer. Heterotetramer of two MnmE and two MnmG subunits. K(+) serves as cofactor.

It is found in the cytoplasm. Functionally, exhibits a very high intrinsic GTPase hydrolysis rate. Involved in the addition of a carboxymethylaminomethyl (cmnm) group at the wobble position (U34) of certain tRNAs, forming tRNA-cmnm(5)s(2)U34. This is tRNA modification GTPase MnmE from Beijerinckia indica subsp. indica (strain ATCC 9039 / DSM 1715 / NCIMB 8712).